The chain runs to 129 residues: M-zodatoxin-Lt8j (129 aa).

An N-terminal signal peptide occupies residues Met-1–Ser-20. The propeptide occupies Lys-21 to Arg-60.

It belongs to the cationic peptide 06 (cytoinsectotoxin) family. In terms of tissue distribution, expressed by the venom gland.

The protein localises to the secreted. Insecticidal, cytolytic and antimicrobial peptide. Forms voltage-dependent, ion-permeable channels in membranes. At high concentration causes cell membrane lysis. The polypeptide is M-zodatoxin-Lt8j (cit 1-9) (Lachesana tarabaevi (Spider)).